The following is a 95-amino-acid chain: MAYGKAHLEAQLKRALAEEIQALEDPRLFLLTVEAVRLSKDGSVLSVYVEAFREEEGALRALSRAERRLVAALARRVRMRRLPRLEFLPWRASPA.

The protein belongs to the RbfA family. In terms of assembly, interacts with the 30S ribosomal subunit as a monomer, binding in a position overlapping the sites of the A and P site tRNAs, and displacing segments of the 16S rRNA. Probably contacts 16S rRNA and ribosomal protein S9 and S13.

The protein resides in the cytoplasm. One of several proteins that assist in the late maturation steps of the functional core of the 30S ribosomal subunit. Associates with free 30S ribosomal subunits (but not with 30S subunits that are part of 70S ribosomes or polysomes). Required for efficient processing of 16S rRNA. Probably interacts with the 5'-terminal helix region of 16S rRNA, bringing together different domains of the 30S ribosomal subunit which aids assembly. This is Ribosome-binding factor A from Thermus thermophilus (strain ATCC 27634 / DSM 579 / HB8).